A 332-amino-acid polypeptide reads, in one-letter code: Putative pumilio homolog 20 (332 aa).

The PUM-HD domain occupies 1 to 332 (MAHQLRFAAA…NIASILNSIR (332 aa)). 2 Pumilio repeats span residues 89-124 (SDPDYFLMIARNMNGSKRIQKLLGKTDDVDALFAAA) and 125-159 (ILRRFLHIITDKYASYVVRRGMTVFDKKKKKAMYE). Residues 160 to 191 (HILHYASHIARDKHGNLALNDIITDAYRNKLF) form a Pumilio 3; degenerate repeat. Pumilio repeat units lie at residues 192–228 (DVIAHKALVLSNDAYGNFVIQRVLKLNDLRSKNNIVV), 229–266 (SLRGHFVDLSFQKYGSYVVDVLLETKESMVVVVEELME), and 267–303 (CEGDMLMRLARNEYGNFLVCKALRVTQKEMVRTDLFW).

It is found in the cytoplasm. Functionally, sequence-specific RNA-binding protein that regulates translation and mRNA stability by binding the 3'-UTR of target mRNAs. The sequence is that of Putative pumilio homolog 20 (APUM20) from Arabidopsis thaliana (Mouse-ear cress).